A 163-amino-acid chain; its full sequence is Small ribosomal subunit protein uS5 (163 aa).

The 64-residue stretch at 8–71 (LVEKIVYLNR…ERAKKDMVQI (64 aa)) folds into the S5 DRBM domain.

Belongs to the universal ribosomal protein uS5 family. As to quaternary structure, part of the 30S ribosomal subunit. Contacts proteins S4 and S8.

Functionally, with S4 and S12 plays an important role in translational accuracy. Its function is as follows. Located at the back of the 30S subunit body where it stabilizes the conformation of the head with respect to the body. This is Small ribosomal subunit protein uS5 from Nitratidesulfovibrio vulgaris (strain DSM 19637 / Miyazaki F) (Desulfovibrio vulgaris).